The chain runs to 458 residues: MTRGAWMCRQYDDGLKIWLAAPRENEKPFIDSERAQKWRLSLASLLFFTVLLSDHLWFCAEAKLTRARDKEHQQQQRQQQQQQQQQRQRQQQQQQRRQQEPSWPALLASMGESSPAAQAHRLLSASSSPTLPPSPGDGGGGGGKGNRGKDDRGKALFLGNSAKPVWRLETCYPQGASSGQCFTVENADAVCARNWSRGAAGGDGQEVRSKHPTPLWNLSDFYLSFCNSYTLWELFSGLSSPNTLNCSLDVVLKEGGEMTTCRQCVEAYQDYDHHAQEKYEEFESVLHKYLQSEEYSVKSCPEDCKIVYKAWLCSQYFEVTQFNCRKTIPCKQYCLEVQTRCPFILPDNDEVIYGGLSSFICTGLYETFLTNDEPECCDVRREEKSNNPSKGTVEKSGSCHRTSLTVSSATRLCNSRLKLCVLVLILLHTVLTASAAQNTAGLSFGGINTLEENSTNEE.

A helical membrane pass occupies residues 40–60 (LSLASLLFFTVLLSDHLWFCA). Residues 70–155 (KEHQQQQRQQ…NRGKDDRGKA (86 aa)) are disordered. The span at 75–96 (QQRQQQQQQQQQRQRQQQQQQR) shows a compositional bias: low complexity. A compositionally biased stretch (gly residues) spans 136 to 145 (GDGGGGGGKG). Disulfide bonds link Cys-191/Cys-261, Cys-226/Cys-313, Cys-246/Cys-261, Cys-304/Cys-341, Cys-324/Cys-377, Cys-330/Cys-376, and Cys-334/Cys-361. An N-linked (GlcNAc...) asparagine glycan is attached at Asn-217. Residues 417–437 (LKLCVLVLILLHTVLTASAAQ) traverse the membrane as a helical segment.

It belongs to the NALF family. In terms of assembly, component of the NALCN channel complex. NALCN complex consists of NALCN and auxiliary subunits, UNC79, UNC80 and NACL1. These auxiliary subunits are essential for the NALCN channel function.

It is found in the cell membrane. Functionally, auxillary component of the NALCN sodium channel complex, a channel that regulates the resting membrane potential and controls neuronal excitability. The protein is NALCN channel auxiliary factor 1 of Homo sapiens (Human).